The primary structure comprises 396 residues: Na(+)/H(+) antiporter NhaA 1 (396 aa).

11 consecutive transmembrane segments (helical) span residues 18 to 38 (LLLI…LSWL), 60 to 80 (LLLW…GLEV), 95 to 115 (IALP…IYTG), 126 to 146 (GWAI…ALLG), 155 to 175 (LFLL…IALF), 178 to 198 (ADLS…LFIL), 201 to 221 (TGVT…ICVL), 262 to 282 (VAYG…LAGI), 295 to 315 (IAAG…WIGV), 333 to 353 (GMAV…TLAL), and 362 to 382 (AARL…YYLL).

This sequence belongs to the NhaA Na(+)/H(+) (TC 2.A.33) antiporter family.

Its subcellular location is the cell inner membrane. It carries out the reaction Na(+)(in) + 2 H(+)(out) = Na(+)(out) + 2 H(+)(in). Its function is as follows. Na(+)/H(+) antiporter that extrudes sodium in exchange for external protons. The polypeptide is Na(+)/H(+) antiporter NhaA 1 (Syntrophotalea carbinolica (strain DSM 2380 / NBRC 103641 / GraBd1) (Pelobacter carbinolicus)).